Reading from the N-terminus, the 236-residue chain is uncharacterized protein (236 aa).

The HTH gntR-type domain occupies 1–69 (MLKYQQIATE…RGSGIFVRKH (69 aa)). The segment at residues 29–48 (LETLMAQFEVSKSTITKSLE) is a DNA-binding region (H-T-H motif).

This is an uncharacterized protein from Bacillus subtilis (strain 168).